The chain runs to 210 residues: Uracil phosphoribosyltransferase (210 aa).

Residues Arg80, Arg105, and 132–140 (DPMLATGGS) contribute to the 5-phospho-alpha-D-ribose 1-diphosphate site. Uracil contacts are provided by residues Ile195 and 200–202 (GDA). Asp201 contacts 5-phospho-alpha-D-ribose 1-diphosphate.

It belongs to the UPRTase family. It depends on Mg(2+) as a cofactor.

It carries out the reaction UMP + diphosphate = 5-phospho-alpha-D-ribose 1-diphosphate + uracil. The protein operates within pyrimidine metabolism; UMP biosynthesis via salvage pathway; UMP from uracil: step 1/1. Allosterically activated by GTP. In terms of biological role, catalyzes the conversion of uracil and 5-phospho-alpha-D-ribose 1-diphosphate (PRPP) to UMP and diphosphate. In Deinococcus radiodurans (strain ATCC 13939 / DSM 20539 / JCM 16871 / CCUG 27074 / LMG 4051 / NBRC 15346 / NCIMB 9279 / VKM B-1422 / R1), this protein is Uracil phosphoribosyltransferase.